Reading from the N-terminus, the 4076-residue chain is E3 ubiquitin-protein ligase TOM1-like (4076 aa).

Positions 225–237 (SSAAPAVSAGSTA) are enriched in low complexity. Disordered stretches follow at residues 225–256 (SSAAPAVSAGSTAKAKDKEKEKEKATGPKNVA), 288–360 (YPDT…RDGP), 748–819 (IPAE…ILPS), 921–970 (LEAP…NKPA), 1083–1103 (SPVQDEEPASEKRTPDVSSGT), 1571–1646 (MALD…ITRE), 1988–2041 (PADA…KRPI), 2067–2110 (NVPA…KLAK), 2275–2295 (EGDKDSRPNNPRGTDPSIGRS), 2356–2551 (SGTA…ELDY), 2581–2634 (GDDL…LLAP), 2782–2817 (IPIPPPHSRESRPTEARRDTYQEPHQAVQFSPESTH), 2858–2955 (EKAR…QAED), 3037–3066 (EQHEQRRRERQNAAGGQDLGPADMDPASIL), 3105–3132 (RQLHAQQGGQAASRSRDAQRPTEAGAGT), 3216–3241 (KQLKEKDAKTPHPLKRSLTGGTNNNG), and 3353–3444 (EEQA…QLTP). Residues 238 to 250 (KAKDKEKEKEKAT) are compositionally biased toward basic and acidic residues. Over residues 311-320 (TTSSPAAPTP) the composition is skewed to low complexity. Over residues 322-343 (RRSSTMNVSQSSRTQRVGSSEE) the composition is skewed to polar residues. Acidic residues predominate over residues 767–778 (EGNDADDDSEDD). Residues 940-950 (VKGKGKEKATD) are compositionally biased toward basic and acidic residues. The span at 959–969 (ASSSSSGNNKP) shows a compositional bias: polar residues. Residues 1606–1620 (PGTSRETNVGASTTA) are compositionally biased toward polar residues. Residues 1621 to 1632 (PQQLPVLPSQQP) are compositionally biased toward low complexity. Residues 1633–1642 (ATESQSNTPR) show a composition bias toward polar residues. Positions 2021-2041 (VTDKDMHDAPKNPAQDLKRPI) are enriched in basic and acidic residues. Residues 2086 to 2096 (NEATPSPSGDE) are compositionally biased toward polar residues. A compositionally biased stretch (basic and acidic residues) spans 2099-2110 (SESKEKEKKLAK). Acidic residues-rich tracts occupy residues 2378–2387 (DLTDDREETP) and 2405–2450 (EFSD…DLGE). The span at 2460 to 2469 (QPGVVEVLMG) shows a compositional bias: low complexity. Acidic residues-rich tracts occupy residues 2470–2516 (ENDD…DLED) and 2523–2551 (EEGNAIDDDGASWDDGTDEDEEDEEELDY). Residues 2587 to 2597 (EPIRDFDGHYI) are compositionally biased toward basic and acidic residues. Residues 2598–2622 (DDDEDGEEDDDEDEGEDDMDDDMYF) are compositionally biased toward acidic residues. Composition is skewed to basic and acidic residues over residues 2788–2803 (HSRESRPTEARRDTYQ) and 2858–2912 (EKAR…ERAE). Residues 2851–2929 (AIQAEKEEKA…QAAADQEANA (79 aa)) adopt a coiled-coil conformation. Low complexity predominate over residues 2913 to 2927 (AAAQAAAQAAADQEA). A compositionally biased stretch (basic and acidic residues) spans 3037–3047 (EQHEQRRRERQ). Residues 3108–3117 (HAQQGGQAAS) are compositionally biased toward polar residues. Positions 3341-3375 (PLQAIERRRKEAEEQAKKKKEAEEKAATEREAANA) form a coiled coil. Over residues 3353–3372 (EEQAKKKKEAEEKAATEREA) the composition is skewed to basic and acidic residues. Over residues 3373-3414 (ANAPEEQASTSTEQTPAQQEATQQPSESTPAAASGQQPAQQD) the composition is skewed to low complexity. Positions 3415–3439 (QENKELEAPKEKADEKDVQSDEKKI) are enriched in basic and acidic residues. The HECT domain maps to 3740-4076 (KADELKFGKL…TAGSDYFGFA (337 aa)). The active-site Glycyl thioester intermediate is the Cys4043.

This sequence belongs to the UPL family. TOM1/PTR1 subfamily.

It is found in the nucleus. It carries out the reaction S-ubiquitinyl-[E2 ubiquitin-conjugating enzyme]-L-cysteine + [acceptor protein]-L-lysine = [E2 ubiquitin-conjugating enzyme]-L-cysteine + N(6)-ubiquitinyl-[acceptor protein]-L-lysine.. It participates in protein modification; protein ubiquitination. Its function is as follows. Probable ubiquitin ligase protein, which may be involved in mRNA export. E3 ubiquitin ligase proteins mediate ubiquitination and subsequent proteasomal degradation of target proteins. Participates in mRNA export from the nucleus by regulating the transport of hnRNP proteins. The polypeptide is E3 ubiquitin-protein ligase TOM1-like (Neurospora crassa (strain ATCC 24698 / 74-OR23-1A / CBS 708.71 / DSM 1257 / FGSC 987)).